The sequence spans 462 residues: Integrator complex subunit 12 (462 aa).

Residues 39 to 132 (LARGIDSSYR…PETRSSPITV (94 aa)) are disordered. Residues 59 to 86 (ISSTKTVSVKQEPKTSSSLPSGNNNGKV) are compositionally biased toward polar residues. Lys68 participates in a covalent cross-link: Glycyl lysine isopeptide (Lys-Gly) (interchain with G-Cter in SUMO2). Residues 88-125 (TTEKVKKEGEKRPADKMKSDITEGADVPKKPRLEKPET) are compositionally biased toward basic and acidic residues. At Ser128 the chain carries Phosphoserine. A PHD-type zinc finger spans residues 159–215 (GLACVVCRQMTVASGNQLVECQECHNLYHQDCHKPQVTDKEVTDPRLVWYCARCTRQ). Residue Lys254 forms a Glycyl lysine isopeptide (Lys-Gly) (interchain with G-Cter in SUMO2) linkage. Positions 305–328 (PSTAKLSSAAQNNSGKPATSSANQ) are enriched in polar residues. The interval 305–462 (PSTAKLSSAA…KKAAQKKLKK (158 aa)) is disordered. Composition is skewed to low complexity over residues 347-358 (KIGSSNSTSPTV) and 382-431 (VSKV…PSAS). Residues 434–443 (GPTSQESQLN) are compositionally biased toward polar residues. Residues 449–462 (QMVKKKAAQKKLKK) show a composition bias toward basic residues.

Belongs to the Integrator subunit 12 family. As to quaternary structure, component of the Integrator complex, composed of core subunits INTS1, INTS2, INTS3, INTS4, INTS5, INTS6, INTS7, INTS8, INTS9/RC74, INTS10, INTS11/CPSF3L, INTS12, INTS13, INTS14 and INTS15. The core complex associates with protein phosphatase 2A subunits PPP2CA and PPP2R1A, to form the Integrator-PP2A (INTAC) complex. In terms of processing, dephosphorylated at Ser-128 by the PNUTS-PP1 complex, promoting RNA polymerase II transcription pause-release.

Its subcellular location is the nucleus. Component of the integrator complex, a multiprotein complex that terminates RNA polymerase II (Pol II) transcription in the promoter-proximal region of genes. The integrator complex provides a quality checkpoint during transcription elongation by driving premature transcription termination of transcripts that are unfavorably configured for transcriptional elongation: the complex terminates transcription by (1) catalyzing dephosphorylation of the C-terminal domain (CTD) of Pol II subunit POLR2A/RPB1 and SUPT5H/SPT5, (2) degrading the exiting nascent RNA transcript via endonuclease activity and (3) promoting the release of Pol II from bound DNA. The integrator complex is also involved in terminating the synthesis of non-coding Pol II transcripts, such as enhancer RNAs (eRNAs), small nuclear RNAs (snRNAs), telomerase RNAs and long non-coding RNAs (lncRNAs). Mediates recruitment of cytoplasmic dynein to the nuclear envelope, probably as component of the integrator complex. This Bos taurus (Bovine) protein is Integrator complex subunit 12 (INTS12).